The chain runs to 405 residues: Elongation factor Tu (405 aa).

The 206-residue stretch at 10 to 215 folds into the tr-type G domain; sequence KPHVNVGTIG…AIDAYIPTPE (206 aa). Residues 19–26 are G1; it reads GHVDHGKT. Position 19-26 (19-26) interacts with GTP; it reads GHVDHGKT. Thr26 provides a ligand contact to Mg(2+). A G2 region spans residues 61–65; sequence GITIN. The tract at residues 82-85 is G3; it reads DCPG. GTP is bound by residues 82–86 and 137–140; these read DCPGH and NKVD. The interval 137–140 is G4; sequence NKVD. Residues 175–177 are G5; sequence SAL.

It belongs to the TRAFAC class translation factor GTPase superfamily. Classic translation factor GTPase family. EF-Tu/EF-1A subfamily. In terms of assembly, monomer.

The protein localises to the cytoplasm. The enzyme catalyses GTP + H2O = GDP + phosphate + H(+). GTP hydrolase that promotes the GTP-dependent binding of aminoacyl-tRNA to the A-site of ribosomes during protein biosynthesis. The polypeptide is Elongation factor Tu (Deinococcus geothermalis (strain DSM 11300 / CIP 105573 / AG-3a)).